The primary structure comprises 712 residues: Sterol uptake control protein 2 (712 aa).

Residues 1 to 19 (MMMTVKQESPNSTLNTSEF) are compositionally biased toward polar residues. A disordered region spans residues 1-52 (MMMTVKQESPNSTLNTSEFSSDENLKTNNSEPPKKVSKSSTGKRKYHQKSRN). A compositionally biased stretch (basic residues) spans 35–50 (KVSKSSTGKRKYHQKS). The zn(2)-C6 fungal-type DNA-binding region spans 54–81 (CSTCKKRRVKCDEQRPVCGNCTKLKLDC). Disordered regions lie at residues 95–150 (KKDI…VIPP) and 236–342 (TTVP…ANPL). Composition is skewed to polar residues over residues 113–143 (STVSAASDSESTTQQATPSLTPSPNHSQDIK), 252–306 (RKSQ…SGSP), and 326–337 (KSLPNISPNMSI).

The protein resides in the nucleus. Its function is as follows. Transcription factor involved in the regulation of ergosterol biosynthetic genes such as ERG2 and ERG11 through direct binding to sterol response elements (SREs) in the promoters. Also binds to its own promoter on 2 cis-acting elements to promote autoregulation. Regulates sterol uptake across the plasma membrane. Acts as a major regulator of ascorbic acid-induced response. Plays a role in the triggering of pyroptosis, an inflammasome-mediated programmed cell death pathway in macrophages, allowing macrophages escaping. The sequence is that of Sterol uptake control protein 2 from Candida albicans (strain SC5314 / ATCC MYA-2876) (Yeast).